The chain runs to 321 residues: Ribosomal RNA small subunit methyltransferase H (321 aa).

Residues 34 to 36 (GGH), Asp-54, Phe-80, Asp-102, and Gln-109 contribute to the S-adenosyl-L-methionine site.

It belongs to the methyltransferase superfamily. RsmH family.

The protein localises to the cytoplasm. It carries out the reaction cytidine(1402) in 16S rRNA + S-adenosyl-L-methionine = N(4)-methylcytidine(1402) in 16S rRNA + S-adenosyl-L-homocysteine + H(+). Its function is as follows. Specifically methylates the N4 position of cytidine in position 1402 (C1402) of 16S rRNA. This is Ribosomal RNA small subunit methyltransferase H from Blochmanniella floridana.